Here is a 75-residue protein sequence, read N- to C-terminus: uncharacterized protein (75 aa).

One can recognise a SpoVT-AbrB domain in the interval 3-45 (TTVFLSNRSQAVRLPKAVALPENVKRVEVIAVGRTRIITPAGE).

It belongs to the VapB family.

This is an uncharacterized protein from Escherichia coli (strain K12).